A 410-amino-acid polypeptide reads, in one-letter code: Aspartic proteinase Asp1 (410 aa).

Positions 1–23 (MTARLALLASLLLLLQLVPPSSA) are cleaved as a signal peptide. Positions 24 to 46 (VVLELHGNVYPIGHFFITMNIGD) are cleaved as a propeptide — removed in mature form. The Peptidase A1 domain maps to 38–392 (FFITMNIGDP…DSERSLLGWV (355 aa)). Catalysis depends on residues D56 and D257.

It belongs to the peptidase A1 family.

The protein is Aspartic proteinase Asp1 (ASP1) of Oryza sativa subsp. japonica (Rice).